The primary structure comprises 312 residues: Mevalonate kinase (312 aa).

104–114 (PISCGLGSSAS) serves as a coordination point for ATP. Asp-155 (proton acceptor) is an active-site residue.

Belongs to the GHMP kinase family. Mevalonate kinase subfamily. In terms of assembly, homodimer. Requires Mg(2+) as cofactor.

It is found in the cytoplasm. The catalysed reaction is (R)-mevalonate + ATP = (R)-5-phosphomevalonate + ADP + H(+). It functions in the pathway isoprenoid biosynthesis; isopentenyl diphosphate biosynthesis via mevalonate pathway; isopentenyl diphosphate from (R)-mevalonate: step 1/3. Farnesyl- and geranyl-pyrophosphates are competitive inhibitors. Slightly inhibited by high concentration of ATP. Its function is as follows. Catalyzes the phosphorylation of (R)-mevalonate (MVA) to (R)-mevalonate 5-phosphate (MVAP). Functions in the mevalonate (MVA) pathway leading to isopentenyl diphosphate (IPP), a key precursor for the biosynthesis of isoprenoid compounds such as archaeal membrane lipids. In Methanocaldococcus jannaschii (strain ATCC 43067 / DSM 2661 / JAL-1 / JCM 10045 / NBRC 100440) (Methanococcus jannaschii), this protein is Mevalonate kinase.